The sequence spans 338 residues: MKVFYDKDADLSLIKGKNVTIIGYGSQGHAHALNLNDSGVKVTVGLRKNGASWNKAVNAGLQVKEVAEAVKDADVVMILLPDEQIADVYKNEVHGNIKQGAALAFAHGFNVHYGAVIPRADLDVIMVAPKAPGHTVRGTYAQGGGVPHLIAVHQDKSGSARDIALSYATANGGGRAGIIETNFREETETDLFGEQAVLCGGTVELIKAGFETLVEAGYAPEMAYFECLHELKLIVDLIYEGGIGNMNYSISNNAEYGEYVTGPRVVTAETKQAMKQCLHDIQTGEYAKSFLLENKAGAPTLISRRRLTADHQIEQVGAKLRAMMPWIAKNKLVDQSKN.

One can recognise a KARI N-terminal Rossmann domain in the interval 1-181 (MKVFYDKDAD…GGGRAGIIET (181 aa)). NADP(+)-binding positions include 24–27 (YGSQ), R47, and S52. The active site involves H107. Position 133 (G133) interacts with NADP(+). The KARI C-terminal knotted domain occupies 182–327 (NFREETETDL…AKLRAMMPWI (146 aa)). D190, E194, E226, and E230 together coordinate Mg(2+). Substrate is bound at residue S251.

It belongs to the ketol-acid reductoisomerase family. Mg(2+) is required as a cofactor.

The enzyme catalyses (2R)-2,3-dihydroxy-3-methylbutanoate + NADP(+) = (2S)-2-acetolactate + NADPH + H(+). The catalysed reaction is (2R,3R)-2,3-dihydroxy-3-methylpentanoate + NADP(+) = (S)-2-ethyl-2-hydroxy-3-oxobutanoate + NADPH + H(+). It participates in amino-acid biosynthesis; L-isoleucine biosynthesis; L-isoleucine from 2-oxobutanoate: step 2/4. It functions in the pathway amino-acid biosynthesis; L-valine biosynthesis; L-valine from pyruvate: step 2/4. Functionally, involved in the biosynthesis of branched-chain amino acids (BCAA). Catalyzes an alkyl-migration followed by a ketol-acid reduction of (S)-2-acetolactate (S2AL) to yield (R)-2,3-dihydroxy-isovalerate. In the isomerase reaction, S2AL is rearranged via a Mg-dependent methyl migration to produce 3-hydroxy-3-methyl-2-ketobutyrate (HMKB). In the reductase reaction, this 2-ketoacid undergoes a metal-dependent reduction by NADPH to yield (R)-2,3-dihydroxy-isovalerate. The sequence is that of Ketol-acid reductoisomerase (NADP(+)) from Ralstonia nicotianae (strain ATCC BAA-1114 / GMI1000) (Ralstonia solanacearum).